A 241-amino-acid chain; its full sequence is Putative integrase ORF241 (241 aa).

A Tyr recombinase domain is found at 82 to 241 (VEAKKTLVSA…AIEMLRKLAD (160 aa)). Catalysis depends on residues Arg-119, Lys-144, His-191, Arg-194, and His-217. Residue Tyr-226 is the O-(3'-phospho-DNA)-tyrosine intermediate of the active site.

It belongs to the 'phage' integrase family.

Its function is as follows. This protein may encode an integrase, which is necessary for integration of the viral DNA into host genome. This chain is Putative integrase ORF241, found in Acidianus convivator (ATV).